The sequence spans 539 residues: GMP synthase [glutamine-hydrolyzing] (539 aa).

The Glutamine amidotransferase type-1 domain maps to 4–202 (KILILDFGSQ…VLGICRAKAD (199 aa)). Cys-81 (nucleophile) is an active-site residue. Catalysis depends on residues His-176 and Glu-178. Residues 203 to 395 (WVMKDHIEEA…LGLPPEMVYR (193 aa)) form the GMPS ATP-PPase domain. Residue 230-236 (SGGVDSS) participates in ATP binding.

Homodimer.

It catalyses the reaction XMP + L-glutamine + ATP + H2O = GMP + L-glutamate + AMP + diphosphate + 2 H(+). It participates in purine metabolism; GMP biosynthesis; GMP from XMP (L-Gln route): step 1/1. Its function is as follows. Catalyzes the synthesis of GMP from XMP. This chain is GMP synthase [glutamine-hydrolyzing], found in Cupriavidus pinatubonensis (strain JMP 134 / LMG 1197) (Cupriavidus necator (strain JMP 134)).